The following is a 406-amino-acid chain: Ribose-phosphate pyrophosphokinase 3, mitochondrial (406 aa).

The interval 1–32 (MAATPHRHLLQPCKNPAISSSETLKPSSSFSL) is disordered. A mitochondrion-targeting transit peptide spans 1 to 87 (MAATPHRHLL…RRFQMSSNQE (87 aa)). Positions 18 to 32 (ISSSETLKPSSSFSL) are enriched in low complexity. Residues aspartate 226 and histidine 228 each contribute to the Mg(2+) site. Residues 309–324 (GRHVVIVDDLVQSGGT) form a binding of phosphoribosylpyrophosphate region.

This sequence belongs to the ribose-phosphate pyrophosphokinase family.

The protein localises to the mitochondrion. The enzyme catalyses D-ribose 5-phosphate + ATP = 5-phospho-alpha-D-ribose 1-diphosphate + AMP + H(+). The chain is Ribose-phosphate pyrophosphokinase 3, mitochondrial (PRS3) from Spinacia oleracea (Spinach).